A 107-amino-acid chain; its full sequence is Thioredoxin (107 aa).

The Thioredoxin domain occupies 2-107 (SEVLHINDAD…QLANFINQHI (106 aa)). A disulfide bond links Cys-32 and Cys-35.

Belongs to the thioredoxin family.

Participates in various redox reactions through the reversible oxidation of its active center dithiol to a disulfide and catalyzes dithiol-disulfide exchange reactions. The polypeptide is Thioredoxin (trxA) (Haemophilus influenzae (strain ATCC 51907 / DSM 11121 / KW20 / Rd)).